A 151-amino-acid chain; its full sequence is Shadow of prion protein (151 aa).

The first 24 residues, M1–A24, serve as a signal peptide directing secretion. The disordered stretch occupies residues W89–T113. N111 carries N-linked (GlcNAc...) asparagine glycosylation. Residue G126 is the site of GPI-anchor amidated glycine attachment. The propeptide at A127 to P151 is removed in mature form.

It belongs to the SPRN family. N-glycosylated. Mainly expressed in brain. In brain, it is expressed in hippocampus.

The protein resides in the cell membrane. Functionally, prion-like protein that has PrP(C)-like neuroprotective activity. May act as a modulator for the biological actions of normal and abnormal PrP. This is Shadow of prion protein (SPRN) from Homo sapiens (Human).